Here is a 397-residue protein sequence, read N- to C-terminus: Efflux pump periplasmic linker BepD (397 aa).

The first 26 residues, 1-26 (MTLNRTIRCFAAGAAFIVFAAQPALA), serve as a signal peptide directing secretion. The stretch at 98 to 139 (APYQAELEKAQAQVAQAEAQYQQSIRDAERAEQLVQQKVQSA) forms a coiled coil.

Belongs to the membrane fusion protein (MFP) (TC 8.A.1) family. In terms of assembly, probably part of a tripartite efflux pump, which is composed of an outer membrane efflux protein, an inner membrane protein and a protein that expands the periplasmic space. Could form a tripartite pump with BepC and BepE.

It is found in the periplasm. In terms of biological role, involved in resistance to several unrelated toxic compounds, such as dyes, detergents and antibiotics. This chain is Efflux pump periplasmic linker BepD (bepD), found in Brucella suis biovar 1 (strain 1330).